The primary structure comprises 374 residues: Putative glutamate--cysteine ligase 2 (374 aa).

The protein belongs to the glutamate--cysteine ligase type 2 family. YbdK subfamily.

It carries out the reaction L-cysteine + L-glutamate + ATP = gamma-L-glutamyl-L-cysteine + ADP + phosphate + H(+). In terms of biological role, ATP-dependent carboxylate-amine ligase which exhibits weak glutamate--cysteine ligase activity. The protein is Putative glutamate--cysteine ligase 2 of Verminephrobacter eiseniae (strain EF01-2).